A 406-amino-acid polypeptide reads, in one-letter code: Oligouridylate-binding protein 1 (406 aa).

RRM domains are found at residues 49-123 (RSVY…WAYA) and 134-212 (YNIF…WAAK). A disordered region spans residues 231-250 (TSGTSDDGQEKVVNEDAPEN). An RRM 3 domain is found at 255-329 (TTVYVGNLAP…KPVKCSWGSK (75 aa)).

It is found in the nucleus. Functionally, heterogeneous nuclear ribonucleoprotein (hnRNP)-like protein that acts as a component of the pre-mRNA processing machinery. Functions to facilitate the nuclear maturation of plant pre-mRNAs. Binds with high affinity to RNA molecules that contain AU-rich regions. May bind to the 3'-UTR and protects the mRNA against exonucleolytic degradation. Associates with nuclear poly(A)+ RNA in nucleus in vivo. Does not stimulate transcription or the 3' end cleavage/polyadenylation reaction. This Nicotiana plumbaginifolia (Leadwort-leaved tobacco) protein is Oligouridylate-binding protein 1 (UBP1).